Consider the following 282-residue polypeptide: Small ribosomal subunit protein uS2 (282 aa).

Residues 260 to 282 (KRRRSKVYKEEEREVVTNEDESR) are disordered. The segment covering 266–282 (VYKEEEREVVTNEDESR) has biased composition (basic and acidic residues).

It belongs to the universal ribosomal protein uS2 family.

The chain is Small ribosomal subunit protein uS2 from Wolbachia sp. subsp. Drosophila simulans (strain wRi).